The chain runs to 429 residues: Polypyrimidine tract-binding protein homolog 2 (429 aa).

Position 2 is an N-acetylserine (S2). 3 consecutive RRM domains span residues 18–96 (KVLH…YSNR), 110–197 (GNVL…YSAH), and 243–323 (SNVL…YSRH). The disordered stretch occupies residues 331-429 (NNDRSRDYTM…QHYGGPGPMH (99 aa)). Residues 367-381 (GGSHHQQQQQPQGGW) are compositionally biased toward low complexity. Gly residues predominate over residues 382–397 (VQPGGQGSMGMGGGGH).

Its subcellular location is the nucleus. Plays a role in pre-mRNA splicing. Binds to the polypyrimidine tract of introns. May promote the binding of U2 snRNP to pre-mRNA. The protein is Polypyrimidine tract-binding protein homolog 2 of Arabidopsis thaliana (Mouse-ear cress).